The sequence spans 319 residues: ATP-dependent 6-phosphofructokinase (319 aa).

Gly11 lines the ATP pocket. 21–25 contacts ADP; that stretch reads RAVVR. ATP contacts are provided by residues 72–73 and 102–105; these read RC and GDGS. Residue Asp103 coordinates Mg(2+). 125–127 is a substrate binding site; sequence TID. Asp127 functions as the Proton acceptor in the catalytic mechanism. Position 154 (Arg154) interacts with ADP. Residues Arg162 and 169–171 contribute to the substrate site; that span reads MGR. Residues 185–187, Arg211, and 213–215 each bind ADP; these read GAE and KRH. Substrate is bound by residues Glu222, Arg243, and 249-252; that span reads HVQR.

Belongs to the phosphofructokinase type A (PFKA) family. ATP-dependent PFK group I subfamily. Prokaryotic clade 'B1' sub-subfamily. In terms of assembly, homotetramer. Requires Mg(2+) as cofactor.

The protein localises to the cytoplasm. The catalysed reaction is beta-D-fructose 6-phosphate + ATP = beta-D-fructose 1,6-bisphosphate + ADP + H(+). Its pathway is carbohydrate degradation; glycolysis; D-glyceraldehyde 3-phosphate and glycerone phosphate from D-glucose: step 3/4. With respect to regulation, allosterically activated by ADP and other diphosphonucleosides, and allosterically inhibited by phosphoenolpyruvate. In terms of biological role, catalyzes the phosphorylation of D-fructose 6-phosphate to fructose 1,6-bisphosphate by ATP, the first committing step of glycolysis. The protein is ATP-dependent 6-phosphofructokinase of Clostridioides difficile (strain 630) (Peptoclostridium difficile).